The sequence spans 358 residues: DNA ligase C (358 aa).

The N6-AMP-lysine intermediate role is filled by K29.

Belongs to the ATP-dependent DNA ligase family. A divalent metal cation serves as cofactor.

The catalysed reaction is ATP + (deoxyribonucleotide)n-3'-hydroxyl + 5'-phospho-(deoxyribonucleotide)m = (deoxyribonucleotide)n+m + AMP + diphosphate.. In terms of biological role, DNA ligase that seals nicks in double-stranded DNA during DNA replication, DNA recombination and DNA repair. The protein is DNA ligase C (ligC) of Mycobacterium tuberculosis (strain ATCC 25618 / H37Rv).